The primary structure comprises 333 residues: Eukaryotic translation initiation factor 2 subunit 2 (333 aa).

Disordered regions lie at residues 1 to 119 and 139 to 164; these read MSGD…DLDI and ILEKDEALEDEDNKKDDGISFSNQTG. Residue S2 is modified to N-acetylserine. A phosphoserine mark is found at S2 and S13. Over residues 13–22 the composition is skewed to basic residues; the sequence is SKKKKKKKKP. T31 and T36 each carry phosphothreonine. Positions 40-51 are enriched in basic and acidic residues; the sequence is ETKEVEPEPTED. Residue S67 is modified to Phosphoserine. A compositionally biased stretch (basic and acidic residues) spans 96-105; it reads EGVKDLKIES. K102 is covalently cross-linked (Glycyl lysine isopeptide (Lys-Gly) (interchain with G-Cter in SUMO2)). Residue S105 is modified to Phosphoserine. Composition is skewed to acidic residues over residues 106–118 and 139–149; these read DVQEPTEPEDDLD and ILEKDEALEDE. T111 carries the phosphothreonine modification. Phosphoserine is present on residues S158 and S218. K265 and K293 each carry N6-acetyllysine. The segment at 281–305 adopts a C4-type zinc-finger fold; that stretch reads CHTCRSPDTILQKDTRLYFLQCETC.

This sequence belongs to the eIF-2-beta/eIF-5 family. In terms of assembly, eukaryotic translation initiation factor 2 eIF2 is a heterotrimeric complex composed of an alpha (EIF2S1), a beta (EIF2S2) and a gamma (EIF2S3) chain. eIF2 is member of the 43S pre-initiation complex (43S PIC). eIF2 forms a complex with at least CELF1/CUGBP1, CALR, CALR3, EIF2S1, EIF2S2, HSP90B1 and HSPA5. Interacts with BZW2/5MP1. Interacts with EIF5.

It localises to the cytoplasm. Its subcellular location is the cytosol. Component of the eIF2 complex that functions in the early steps of protein synthesis by forming a ternary complex with GTP and initiator tRNA. This complex binds to a 40S ribosomal subunit, followed by mRNA binding to form the 43S pre-initiation complex (43S PIC). Junction of the 60S ribosomal subunit to form the 80S initiation complex is preceded by hydrolysis of the GTP bound to eIF2 and release of an eIF2-GDP binary complex. In order for eIF2 to recycle and catalyze another round of initiation, the GDP bound to eIF2 must exchange with GTP by way of a reaction catalyzed by eIF2B. This chain is Eukaryotic translation initiation factor 2 subunit 2 (EIF2S2), found in Pongo abelii (Sumatran orangutan).